Reading from the N-terminus, the 339-residue chain is Biotin synthase (339 aa).

Positions 55 to 282 constitute a Radical SAM core domain; that stretch reads NAVQLSTLLS…KAVVRLSAGR (228 aa). 3 residues coordinate [4Fe-4S] cluster: cysteine 70, cysteine 74, and cysteine 77. Residues cysteine 114, cysteine 145, cysteine 205, and arginine 277 each coordinate [2Fe-2S] cluster.

It belongs to the radical SAM superfamily. Biotin synthase family. As to quaternary structure, homodimer. Requires [4Fe-4S] cluster as cofactor. It depends on [2Fe-2S] cluster as a cofactor.

It carries out the reaction (4R,5S)-dethiobiotin + (sulfur carrier)-SH + 2 reduced [2Fe-2S]-[ferredoxin] + 2 S-adenosyl-L-methionine = (sulfur carrier)-H + biotin + 2 5'-deoxyadenosine + 2 L-methionine + 2 oxidized [2Fe-2S]-[ferredoxin]. It functions in the pathway cofactor biosynthesis; biotin biosynthesis; biotin from 7,8-diaminononanoate: step 2/2. Functionally, catalyzes the conversion of dethiobiotin (DTB) to biotin by the insertion of a sulfur atom into dethiobiotin via a radical-based mechanism. The sequence is that of Biotin synthase from Burkholderia vietnamiensis (strain G4 / LMG 22486) (Burkholderia cepacia (strain R1808)).